Consider the following 1072-residue polypeptide: DNA-directed RNA polymerase subunit beta (1072 aa).

It belongs to the RNA polymerase beta chain family. In plastids the minimal PEP RNA polymerase catalytic core is composed of four subunits: alpha, beta, beta', and beta''. When a (nuclear-encoded) sigma factor is associated with the core the holoenzyme is formed, which can initiate transcription.

The protein resides in the plastid. The protein localises to the chloroplast. It catalyses the reaction RNA(n) + a ribonucleoside 5'-triphosphate = RNA(n+1) + diphosphate. In terms of biological role, DNA-dependent RNA polymerase catalyzes the transcription of DNA into RNA using the four ribonucleoside triphosphates as substrates. The chain is DNA-directed RNA polymerase subunit beta from Arabidopsis thaliana (Mouse-ear cress).